Reading from the N-terminus, the 273-residue chain is NH(3)-dependent NAD(+) synthetase (273 aa).

47–54 (GISGGQDS) contributes to the ATP binding site. Residue aspartate 53 coordinates Mg(2+). Arginine 139 contacts deamido-NAD(+). Threonine 159 contacts ATP. Glutamate 164 lines the Mg(2+) pocket. 2 residues coordinate deamido-NAD(+): lysine 172 and aspartate 179. ATP is bound by residues lysine 188 and threonine 210. 259–260 (HK) contacts deamido-NAD(+).

Belongs to the NAD synthetase family. As to quaternary structure, homodimer.

It carries out the reaction deamido-NAD(+) + NH4(+) + ATP = AMP + diphosphate + NAD(+) + H(+). It functions in the pathway cofactor biosynthesis; NAD(+) biosynthesis; NAD(+) from deamido-NAD(+) (ammonia route): step 1/1. Functionally, catalyzes the ATP-dependent amidation of deamido-NAD to form NAD. Uses ammonia as a nitrogen source. The sequence is that of NH(3)-dependent NAD(+) synthetase from Staphylococcus aureus (strain N315).